The sequence spans 567 residues: Cytochrome P450 monooxygenase 69 (567 aa).

Residues 7–24 traverse the membrane as a helical segment; the sequence is ELAALTVVLLATGVLFYA. N-linked (GlcNAc...) asparagine glycans are attached at residues N25, N81, N223, and N279. C475 is a heme binding site.

This sequence belongs to the cytochrome P450 family. Heme is required as a cofactor.

Its subcellular location is the membrane. It functions in the pathway secondary metabolite biosynthesis. Functionally, cytochrome P450 monooxygenase that is able to use 4-ethoxybenzoic acid as a substrate for oxidation. The chain is Cytochrome P450 monooxygenase 69 from Postia placenta (strain ATCC 44394 / Madison 698-R) (Brown rot fungus).